A 328-amino-acid chain; its full sequence is MTQQAKEPKFIKNGIYRKDAVPVRDKKPEWLKVTIPTGQVYGEVRKIVKEHRLHTVCEEAMCPNIGECWSRGTATFMLMGHICTRACRFCAVDTGNPMGKLDLEEPAHVAESVRLMGLKYVVLTSVDRDDLPDGGAYHFAKTVTAIKRENPGTRVEALTPDFGGNPHCVDLVLESGVDVYAQNLETVRRLTHPVRDIRASYERTLGVLKHAKQSRPDVITKTSIMLGLGETREELREAMLDCRAHGVDVITFGQYLRPTMHHLPVERYVSPAEFDEIREEGLSLGFLEVVAGPLVRSSYKAEQIVMDKPGNLPEHLAHLEGKEQLSLI.

[4Fe-4S] cluster contacts are provided by cysteine 57, cysteine 62, cysteine 68, cysteine 83, cysteine 87, cysteine 90, and serine 298. One can recognise a Radical SAM core domain in the interval 69–287 (WSRGTATFML…REEGLSLGFL (219 aa)).

It belongs to the radical SAM superfamily. Lipoyl synthase family. It depends on [4Fe-4S] cluster as a cofactor.

The protein resides in the cytoplasm. The enzyme catalyses [[Fe-S] cluster scaffold protein carrying a second [4Fe-4S](2+) cluster] + N(6)-octanoyl-L-lysyl-[protein] + 2 oxidized [2Fe-2S]-[ferredoxin] + 2 S-adenosyl-L-methionine + 4 H(+) = [[Fe-S] cluster scaffold protein] + N(6)-[(R)-dihydrolipoyl]-L-lysyl-[protein] + 4 Fe(3+) + 2 hydrogen sulfide + 2 5'-deoxyadenosine + 2 L-methionine + 2 reduced [2Fe-2S]-[ferredoxin]. It participates in protein modification; protein lipoylation via endogenous pathway; protein N(6)-(lipoyl)lysine from octanoyl-[acyl-carrier-protein]: step 2/2. In terms of biological role, catalyzes the radical-mediated insertion of two sulfur atoms into the C-6 and C-8 positions of the octanoyl moiety bound to the lipoyl domains of lipoate-dependent enzymes, thereby converting the octanoylated domains into lipoylated derivatives. In Deinococcus geothermalis (strain DSM 11300 / CIP 105573 / AG-3a), this protein is Lipoyl synthase.